The sequence spans 96 residues: Large ribosomal subunit protein eL43 (96 aa).

The C4-type zinc finger occupies 41–62 (CPVCAFPKLKRAGTSIWVCDKC).

This sequence belongs to the eukaryotic ribosomal protein eL43 family. Zn(2+) serves as cofactor.

The sequence is that of Large ribosomal subunit protein eL43 from Methanococcus vannielii (strain ATCC 35089 / DSM 1224 / JCM 13029 / OCM 148 / SB).